A 972-amino-acid polypeptide reads, in one-letter code: Nuclear factor NF-kappa-B p105 subunit (972 aa).

Positions 39–246 constitute an RHD domain; sequence ADGPYLQILE…DAIYDSKAPN (208 aa). Cysteine 61 carries the post-translational modification S-nitrosocysteine; alternate. Residue cysteine 61 is the site of S-(15-deoxy-Delta12,14-prostaglandin J2-9-yl)cysteine; alternate attachment. Lysine 325 participates in a covalent cross-link: Glycyl lysine isopeptide (Lys-Gly) (interchain with G-Cter in SUMO2). The residue at position 337 (serine 337) is a Phosphoserine; by PKA. Positions 360–365 match the Nuclear localization signal motif; sequence QRKRQK. Residues 372–394 form a GRR region; sequence DSFGGGSGAGAGGGGMFGSGGGG. The tract at residues 425 to 473 is disordered; sequence KSNAGMKHGTIDTPSKNDSEGCGKNVDREAVNLSGKVTEPTEQDKESSM. 2 positions are modified to N6-acetyllysine; by EP300: lysine 431 and lysine 440. The tract at residues 435-972 is interaction with CFLAR; it reads IDTPSKNDSE…GQEGPIEGKI (538 aa). Residues 439–454 are compositionally biased toward basic and acidic residues; that stretch reads SKNDSEGCGKNVDREA. ANK repeat units lie at residues 539-568, 578-607, 611-640, 647-676, 681-711, and 715-744; these read NGDSVLHLAIIHLHAQLVRDLLEVTSGLIS, LYQTPLHLAVITKQEAVVDDLLRAGADLSL, LGNSVLHLAAKEGQDKILSILLKHKKAALL, EGLNAIHIAVMSNSMPCLLLLVAAGADVNA, SGRTALHLAVEHDNISLAGCLLLEGDAHVDS, and DGTTPLHIAAGRGSTRLAALLKAAGADPLV. The interval 647–681 is essential for interaction with HIF1AN; that stretch reads EGLNAIHIAVMSNSMPCLLLLVAAGADVNAQERKS. Position 675 is a (3S)-3-hydroxyasparagine; by HIF1AN (asparagine 675). Residue serine 756 is modified to Phosphoserine. The ANK 7 repeat unit spans residues 768 to 798; sequence PGTTPLDMATNWQVFDILNGKPYEPEFTSDD. Positions 814-889 constitute a Death domain; the sequence is LQLYKLLEIP…EAIEVIQAAF (76 aa). Residues 894 to 926 form a disordered region; it reads TAAPSPGKGAPQTLSLPLSSASTRSPVDEVRDD. Over residues 905-918 the composition is skewed to polar residues; it reads QTLSLPLSSASTRS. Phosphoserine; by GSK3-beta; in vitro occurs at positions 908 and 912. At serine 927 the chain carries Phosphoserine. 2 positions are modified to phosphoserine; by IKKB: serine 931 and serine 936. Position 941 is a phosphoserine (serine 941). The residue at position 947 (threonine 947) is a Phosphothreonine.

Component of the NF-kappa-B p65-p50 complex. Homodimer; component of the NF-kappa-B p50-p50 complex. Component of the NF-kappa-B p105-p50 complex. Component of the NF-kappa-B p50-c-Rel complex. Component of a complex consisting of the NF-kappa-B p50-p50 homodimer and BCL3. Also interacts with MAP3K8. NF-kappa-B p50 subunit interacts with NCOA3 coactivator, which may coactivate NF-kappa-B dependent expression via its histone acetyltransferase activity. Interacts with TSC22D3; this interaction prevents nuclear translocation and DNA-binding. Interacts with SPAG9 and UNC5CL. NFKB1/p105 interacts with CFLAR; the interaction inhibits p105 processing into p50. NFKB1/p105 forms a ternary complex with MAP3K8 and TNIP2. Interacts with GSK3B; the interaction prevents processing of p105 to p50. NFKB1/p50 interacts with NFKBIE. NFKB1/p50 interacts with NFKBIZ. Nuclear factor NF-kappa-B p50 subunit interacts with NFKBID. Directly interacts with MEN1. Interacts with HIF1AN. Interacts with FEM1A; interaction is direct. Generation of the NF-kappa-B p50 (Nuclear factor NF-kappa-B p50 subunit) transcription factor takes place both cotranslationally and post-translationally via non-mutually exclusive mechanisms. A cotranslational processing allows the production of both p50 and p105 (Nuclear factor NF-kappa-B p105 subunit) from a single NFKB1 mRNA. While translation occurs, the particular unfolded structure after the GRR repeat region acts as a substrate for the proteasome, promoting degradation of the C-terminus. The GRR acts as a proteasomal 'stop signal', protecting the region upstream of the GRR from degradation and promoting generation of p50. It is unclear if limited proteasome degradation during cotranslational processing depends on ubiquitination. NF-kappa-B p50 is also generated post-translationally following ubiquitination by the KPC complex, leading to limited processing by the proteasome downstream of the GRR region, thereby generating p50. In terms of processing, phosphorylation at the C-terminus by IKBKB/IKKB acts as a signal for ubiquitination and promotes either complete degradation or processing to generate the NF-kappa-B p50 (Nuclear factor NF-kappa-B p50 subunit). Phosphorylation at Ser-908 and Ser-912 primes p105 for proteolytic processing in response to TNF-alpha stimulation. Phosphorylation at Ser-927, Ser-931 and Ser-936 are required for BTRC/BTRCP-mediated ubiquitination and proteolysis. Phosphorylation at Ser-931 is also required for ubiquitination by the KPC complex and limited processing to generate NF-kappa-B p50 (Nuclear factor NF-kappa-B p50 subunit). Post-translationally, polyubiquitinated at multiple Lys residues in the C-terminus. Polyubiquitinated by the SCF(FBXW11) and SCF(BTRC) complexes following phosphorylation at Ser-923, Ser-927, Ser-931 and Ser-936, leading to its complete degradation. In contrast, polyubiquitination by the KPC complex following phosphorylation at Ser-931 leads to limited proteosomal processing and generation of the active NF-kappa-B p50 (Nuclear factor NF-kappa-B p50 subunit). S-nitrosylation of Cys-61 affects DNA binding. In terms of processing, the covalent modification of cysteine by 15-deoxy-Delta12,14-prostaglandin-J2 is autocatalytic and reversible. It may occur as an alternative to other cysteine modifications, such as S-nitrosylation and S-palmitoylation.

It is found in the cytoplasm. Its subcellular location is the nucleus. In terms of biological role, NF-kappa-B is a pleiotropic transcription factor present in almost all cell types and is the endpoint of a series of signal transduction events that are initiated by a vast array of stimuli related to many biological processes such as inflammation, immunity, differentiation, cell growth, tumorigenesis and apoptosis. NF-kappa-B is a homo- or heterodimeric complex formed by the Rel-like domain-containing proteins RELA/p65, RELB, NFKB1/p105, NFKB1/p50, REL and NFKB2/p52 and the heterodimeric p65-p50 complex appears to be most abundant one. The dimers bind at kappa-B sites in the DNA of their target genes and the individual dimers have distinct preferences for different kappa-B sites that they can bind with distinguishable affinity and specificity. Different dimer combinations act as transcriptional activators or repressors, respectively. NF-kappa-B is controlled by various mechanisms of post-translational modification and subcellular compartmentalization as well as by interactions with other cofactors or corepressors. NF-kappa-B complexes are held in the cytoplasm in an inactive state complexed with members of the NF-kappa-B inhibitor (I-kappa-B) family. In a conventional activation pathway, I-kappa-B is phosphorylated by I-kappa-B kinases (IKKs) in response to different activators, subsequently degraded thus liberating the active NF-kappa-B complex which translocates to the nucleus. NF-kappa-B heterodimeric p65-p50 and RelB-p50 complexes are transcriptional activators. The NF-kappa-B p50-p50 homodimer is a transcriptional repressor, but can act as a transcriptional activator when associated with BCL3. NFKB1 appears to have dual functions such as cytoplasmic retention of attached NF-kappa-B proteins by p105 and generation of p50 by a cotranslational processing. The proteasome-mediated process ensures the production of both p50 and p105 and preserves their independent function, although processing of NFKB1/p105 also appears to occur post-translationally. p50 binds to the kappa-B consensus sequence 5'-GGRNNYYCC-3', located in the enhancer region of genes involved in immune response and acute phase reactions. In a complex with MAP3K8, NFKB1/p105 represses MAP3K8-induced MAPK signaling; active MAP3K8 is released by proteasome-dependent degradation of NFKB1/p105. Functionally, P105 is the precursor of the active p50 subunit (Nuclear factor NF-kappa-B p50 subunit) of the nuclear factor NF-kappa-B. Acts as a cytoplasmic retention of attached NF-kappa-B proteins by p105. Constitutes the active form, which associates with RELA/p65 to form the NF-kappa-B p65-p50 complex to form a transcription factor. Together with RELA/p65, binds to the kappa-B consensus sequence 5'-GGRNNYYCC-3', located in the enhancer region of genes involved in immune response and acute phase reactions. This chain is Nuclear factor NF-kappa-B p105 subunit (NFKB1), found in Canis lupus familiaris (Dog).